The chain runs to 707 residues: Ribosomal RNA large subunit methyltransferase K/L (707 aa).

In terms of domain architecture, THUMP spans Q43–M154.

Belongs to the methyltransferase superfamily. RlmKL family.

The protein localises to the cytoplasm. It carries out the reaction guanosine(2445) in 23S rRNA + S-adenosyl-L-methionine = N(2)-methylguanosine(2445) in 23S rRNA + S-adenosyl-L-homocysteine + H(+). The enzyme catalyses guanosine(2069) in 23S rRNA + S-adenosyl-L-methionine = N(2)-methylguanosine(2069) in 23S rRNA + S-adenosyl-L-homocysteine + H(+). Functionally, specifically methylates the guanine in position 2445 (m2G2445) and the guanine in position 2069 (m7G2069) of 23S rRNA. This chain is Ribosomal RNA large subunit methyltransferase K/L, found in Vibrio parahaemolyticus serotype O3:K6 (strain RIMD 2210633).